Here is a 485-residue protein sequence, read N- to C-terminus: Glutamate--tRNA ligase 1 (485 aa).

Residues 10–20 (PSPTGAIHIGN) carry the 'HIGH' region motif. A 'KMSKS' region motif is present at residues 252-256 (KLSKR). Lys-255 is a binding site for ATP.

The protein belongs to the class-I aminoacyl-tRNA synthetase family. Glutamate--tRNA ligase type 1 subfamily. As to quaternary structure, monomer.

The protein localises to the cytoplasm. The enzyme catalyses tRNA(Glu) + L-glutamate + ATP = L-glutamyl-tRNA(Glu) + AMP + diphosphate. Catalyzes the attachment of glutamate to tRNA(Glu) in a two-step reaction: glutamate is first activated by ATP to form Glu-AMP and then transferred to the acceptor end of tRNA(Glu). In Thermoanaerobacter pseudethanolicus (strain ATCC 33223 / 39E) (Clostridium thermohydrosulfuricum), this protein is Glutamate--tRNA ligase 1.